We begin with the raw amino-acid sequence, 487 residues long: Sugar transporter ERD6-like 6 (487 aa).

The residue at position 2 (S2) is an N-acetylserine. Helical transmembrane passes span 46–66 (ISVLACVLIVALGPIQFGFTC), 89–109 (VFGSLSNVGAMVGAIASGQIA), 115–135 (KGSLMIAAIPNIIGWLCISFA), 146–166 (LLEGFGVGIISYTVPVYIAEI), 178–198 (VNQLSVTIGIMLAYLLGLFVP), 201–221 (ILAVLGILPCTLLIPGLFFIP), 284–304 (LMVGIGLLVLQQLGGINGVLF), 320–340 (AATFGVGAIQVVATAISTWLV), 347–367 (LLLTISSVGMTISLVIVAAAF), 389–409 (VGVVAMVVFFSLGMGPIPWLI), 425–445 (IATLANWFFSWLITMTANLLL), and 451–471 (GTFTLYGLVCAFTVVFVTLWV).

It belongs to the major facilitator superfamily. Sugar transporter (TC 2.A.1.1) family.

The protein resides in the membrane. In terms of biological role, sugar transporter. The sequence is that of Sugar transporter ERD6-like 6 from Arabidopsis thaliana (Mouse-ear cress).